The primary structure comprises 300 residues: UDP-3-O-acyl-N-acetylglucosamine deacetylase (300 aa).

Positions 76, 235, and 239 each coordinate Zn(2+). The active-site Proton donor is H262.

It belongs to the LpxC family. The cofactor is Zn(2+).

The catalysed reaction is a UDP-3-O-[(3R)-3-hydroxyacyl]-N-acetyl-alpha-D-glucosamine + H2O = a UDP-3-O-[(3R)-3-hydroxyacyl]-alpha-D-glucosamine + acetate. It functions in the pathway glycolipid biosynthesis; lipid IV(A) biosynthesis; lipid IV(A) from (3R)-3-hydroxytetradecanoyl-[acyl-carrier-protein] and UDP-N-acetyl-alpha-D-glucosamine: step 2/6. Catalyzes the hydrolysis of UDP-3-O-myristoyl-N-acetylglucosamine to form UDP-3-O-myristoylglucosamine and acetate, the committed step in lipid A biosynthesis. This is UDP-3-O-acyl-N-acetylglucosamine deacetylase from Halorhodospira halophila (strain DSM 244 / SL1) (Ectothiorhodospira halophila (strain DSM 244 / SL1)).